Reading from the N-terminus, the 314-residue chain is Ribosomal protein L11 methyltransferase (314 aa).

Positions 163, 184, 206, and 248 each coordinate S-adenosyl-L-methionine.

Belongs to the methyltransferase superfamily. PrmA family.

The protein resides in the cytoplasm. The enzyme catalyses L-lysyl-[protein] + 3 S-adenosyl-L-methionine = N(6),N(6),N(6)-trimethyl-L-lysyl-[protein] + 3 S-adenosyl-L-homocysteine + 3 H(+). In terms of biological role, methylates ribosomal protein L11. The protein is Ribosomal protein L11 methyltransferase of Lactobacillus acidophilus (strain ATCC 700396 / NCK56 / N2 / NCFM).